Consider the following 181-residue polypeptide: Malignant T-cell-amplified sequence 2 (181 aa).

Residues 92–171 enclose the PUA domain; that stretch reads LPHQQVDKGA…IGIENIHYLN (80 aa).

The protein belongs to the MCTS1 family.

The protein resides in the cytoplasm. The polypeptide is Malignant T-cell-amplified sequence 2 (Mus musculus (Mouse)).